A 604-amino-acid polypeptide reads, in one-letter code: Prostaglandin G/H synthase 2 (604 aa).

An N-terminal signal peptide occupies residues 1–17; that stretch reads MLARALLLCAAVALSGA. In terms of domain architecture, EGF-like spans 18–55; the sequence is ANPCCSHPCQNRGVCMSVGFDQYKCDCTRTGFYGENCT. 4 disulfides stabilise this stretch: Cys-21/Cys-32, Cys-22/Cys-145, Cys-26/Cys-42, and Cys-44/Cys-54. The N-linked (GlcNAc...) asparagine glycan is linked to Asn-53. Residue Arg-106 participates in substrate binding. Asn-130 is a glycosylation site (N-linked (GlcNAc...) asparagine). The active-site Proton acceptor is His-193. Tyr-341 lines the substrate pocket. The active-site For cyclooxygenase activity is Tyr-371. His-374 contacts heme b. Asn-396 carries N-linked (GlcNAc...) asparagine glycosylation. Cys-526 carries the post-translational modification S-nitrosocysteine. Residues Cys-555 and Cys-561 are joined by a disulfide bond. Ser-565 carries the O-acetylserine modification. Asn-580 carries an N-linked (GlcNAc...) asparagine glycan.

It belongs to the prostaglandin G/H synthase family. As to quaternary structure, homodimer. Requires heme b as cofactor. In terms of processing, S-nitrosylation by NOS2 (iNOS) activates enzyme activity. S-nitrosylation may take place on different Cys residues in addition to Cys-526. Acetylated at Ser-565 by SPHK1. During neuroinflammation, acetylation by SPHK1 promotes neuronal secretion of specialized preresolving mediators (SPMs), especially 15-R-lipoxin A4, which results in an increase of phagocytic microglia.

It localises to the microsome membrane. The protein resides in the endoplasmic reticulum membrane. It is found in the nucleus inner membrane. Its subcellular location is the nucleus outer membrane. The enzyme catalyses (5Z,8Z,11Z,14Z)-eicosatetraenoate + AH2 + 2 O2 = prostaglandin H2 + A + H2O. The catalysed reaction is (5Z,8Z,11Z,14Z)-eicosatetraenoate + 2 O2 = prostaglandin G2. It carries out the reaction prostaglandin G2 + AH2 = prostaglandin H2 + A + H2O. It catalyses the reaction (5Z,8Z,11Z,14Z,17Z)-eicosapentaenoate + 2 O2 = prostaglandin G3. The enzyme catalyses prostaglandin G3 + AH2 = prostaglandin H3 + A + H2O. The catalysed reaction is (8Z,11Z,14Z)-eicosatrienoate + 2 O2 = prostaglandin G1. It carries out the reaction prostaglandin G1 + AH2 = prostaglandin H1 + A + H2O. It catalyses the reaction 2-(5Z,8Z,11Z,14Z)-eicosatetraenoyl-sn-glycero-3-phosphoethanolamine + 2 O2 = 2-(prostaglandin G2)-sn-glycero-3-phosphoethanolamine. The enzyme catalyses 2-(prostaglandin G2)-sn-glycero-3-phosphoethanolamine + AH2 = 2-(prostaglandin H2)-sn-glycero-3-phosphoethanolamine + A + H2O. The catalysed reaction is 2-(5Z,8Z,11Z,14Z)-eicosatetraenoyl-sn-glycero-3-phosphocholine + 2 O2 = 2-(prostaglandin G2)-sn-glycero-3-phosphocholine. It carries out the reaction 2-(prostaglandin G2)-sn-glycero-3-phosphocholine + AH2 = 2-(prostaglandin H2)-sn-glycero-3-phosphocholine + A + H2O. It catalyses the reaction (15S)-hydroperoxy-(5Z,8Z,11Z,13E)-eicosatetraenoate + AH2 = (15S)-hydroxy-(5Z,8Z,11Z,13E)-eicosatetraenoate + A + H2O. The enzyme catalyses 2-(5Z,8Z,11Z,14Z)-eicosatetraenoyl-sn-glycero-3-phosphocholine + AH2 + O2 = 2-[(15S)-hydroxy-(5Z,8Z,11Z,13E)-eicosatetraenoyl]-sn-glycero-3-phosphocholine + A + H2O. The catalysed reaction is 2-(5Z,8Z,11Z,14Z)-eicosatetraenoyl-sn-glycero-3-phosphocholine + AH2 + O2 = 2-[(15R)-hydroxy-(5Z,8Z,11Z,13E)-eicosatetraenoyl]-sn-glycero-3-phosphocholine + A + H2O. It carries out the reaction 2-(5Z,8Z,11Z,14Z)-eicosatetraenoyl-sn-glycero-3-phosphocholine + AH2 + O2 = 2-[(11R)-hydroxy-(5Z,8Z,12E,14Z)-eicosatetraenoyl]-sn-glycero-3-phosphocholine + A + H2O. It catalyses the reaction (9Z,12Z)-octadecadienoate + AH2 + O2 = 9-hydroxy-(10E,12Z)-octadecadienoate + A + H2O. The enzyme catalyses (9Z,12Z)-octadecadienoate + AH2 + O2 = 13-hydroxy-(9Z,11E)-octadecadienoate + A + H2O. The catalysed reaction is (5Z,8Z,11Z,14Z)-eicosatetraenoate + AH2 + O2 = (15R)-hydroxy-(5Z,8Z,11Z,13E)-eicosatetraenoate + A + H2O. It carries out the reaction (5Z,8Z,11Z,14Z)-eicosatetraenoate + AH2 + O2 = (11R)-hydroxy-(5Z,8Z,12E,14Z)-eicosatetraenoate + A + H2O. It catalyses the reaction (5Z,8Z,11Z,14Z,17Z)-eicosapentaenoate + AH2 + O2 = (11R)-hydroxy-(5Z,8Z,12E,14Z,17Z)-eicosapentaenoate + A + H2O. The enzyme catalyses (5Z,8Z,11Z,14Z,17Z)-eicosapentaenoate + AH2 + O2 = (18S)-hydroxy-(5Z,8Z,11Z,14Z,16E)-eicosapentaenoate + A + H2O. The catalysed reaction is (5Z,8Z,11Z,14Z,17Z)-eicosapentaenoate + AH2 + O2 = (18R)-hydroxy-(5Z,8Z,11Z,14Z,16E)-eicosapentaenoate + A + H2O. It carries out the reaction (5Z,8Z,11Z,14Z,17Z)-eicosapentaenoate + AH2 + O2 = (15R)-hydroxy-(5Z,8Z,11Z,13E,17Z)-eicosapentaenoate + A + H2O. It catalyses the reaction (5Z,8Z,11Z,14Z,17Z)-eicosapentaenoate + AH2 + O2 = (15S)-hydroxy-(5Z,8Z,11Z,13E,17Z)-eicosapentaenoate + A + H2O. The enzyme catalyses (7Z,10Z,13Z,16Z,19Z)-docosapentaenoate + AH2 + O2 = 13R-hydroxy-(7Z,10Z,14E,16Z,19Z)-docosapentaenoate + A + H2O. The catalysed reaction is (4Z,7Z,10Z,13Z,16Z,19Z)-docosahexaenoate + AH2 + O2 = 13-hydroxy-(4Z,7Z,10Z,14E,16Z,19Z)-docosahexaenoate + A + H2O. It carries out the reaction (5S)-hydroxy-(6E,8Z,11Z,14Z)-eicosatetraenoate + AH2 + O2 = (5S,15R)-dihydroxy-(6E,8Z,11Z,13E)-eicosatetraenoate + A + H2O. It catalyses the reaction (4Z,7Z,10Z,13Z,16Z,19Z)-docosahexaenoate + AH2 + O2 = 17R-hydroxy-(4Z,7Z,10Z,13Z,15E,19Z)-docosahexaenoate + A + H2O. The enzyme catalyses (5S)-hydroxy-(6E,8Z,11Z,14Z)-eicosatetraenoate + AH2 + O2 = (5S,15S)-dihydroxy-(6E,8Z,11Z,13E)-eicosatetraenoate + A + H2O. The catalysed reaction is (5S)-hydroxy-(6E,8Z,11Z,14Z)-eicosatetraenoate + AH2 + O2 = (5S,11R)-dihydroxy-(6E,8Z,12E,14Z)-eicosatetraenoate + A + H2O. It carries out the reaction 2-(5Z,8Z,11Z,14Z-eicosatetraenoyl)-glycerol + 2 O2 = 2-glyceryl-prostaglandin G2. It catalyses the reaction 2-glyceryl-prostaglandin G2 + AH2 = 2-glyceryl-prostaglandin H2 + A + H2O. The enzyme catalyses (5Z,8Z,11Z,14Z)-eicosatetraenoate + O2 = (15R)-hydroperoxy-(5Z,8Z,11Z,13E)-eicosatetraenoate. The catalysed reaction is (5Z,8Z,11Z,14Z)-eicosatetraenoate + O2 = 11R-hydroperoxy-(5Z,8Z,12E,14Z)-eicosatetraenoate. It carries out the reaction (9Z,12Z)-octadecadienoate + AH2 + O2 = (9R)-hydroxy-(10E,12Z)-octadecadienoate + A + H2O. It catalyses the reaction (9Z,12Z)-octadecadienoate + AH2 + O2 = (9S)-hydroxy-(10E,12Z)-octadecadienoate + A + H2O. The enzyme catalyses (9Z,12Z)-octadecadienoate + AH2 + O2 = (13S)-hydroxy-(9Z,11E)-octadecadienoate + A + H2O. The catalysed reaction is (9Z,12Z)-octadecadienoate + AH2 + O2 = (13R)-hydroxy-(9Z,11E)-octadecadienoate + A + H2O. Its pathway is lipid metabolism; prostaglandin biosynthesis. Its function is as follows. Dual cyclooxygenase and peroxidase in the biosynthesis pathway of prostanoids, a class of C20 oxylipins mainly derived from arachidonate ((5Z,8Z,11Z,14Z)-eicosatetraenoate, AA, C20:4(n-6)), with a particular role in the inflammatory response. The cyclooxygenase activity oxygenates AA to the hydroperoxy endoperoxide prostaglandin G2 (PGG2), and the peroxidase activity reduces PGG2 to the hydroxy endoperoxide prostaglandin H2 (PGH2), the precursor of all 2-series prostaglandins and thromboxanes. This complex transformation is initiated by abstraction of hydrogen at carbon 13 (with S-stereochemistry), followed by insertion of molecular O2 to form the endoperoxide bridge between carbon 9 and 11 that defines prostaglandins. The insertion of a second molecule of O2 (bis-oxygenase activity) yields a hydroperoxy group in PGG2 that is then reduced to PGH2 by two electrons. Similarly catalyzes successive cyclooxygenation and peroxidation of dihomo-gamma-linoleate (DGLA, C20:3(n-6)) and eicosapentaenoate (EPA, C20:5(n-3)) to corresponding PGH1 and PGH3, the precursors of 1- and 3-series prostaglandins. In an alternative pathway of prostanoid biosynthesis, converts 2-arachidonoyl lysophopholipids to prostanoid lysophopholipids, which are then hydrolyzed by intracellular phospholipases to release free prostanoids. Metabolizes 2-arachidonoyl glycerol yielding the glyceryl ester of PGH2, a process that can contribute to pain response. Generates lipid mediators from n-3 and n-6 polyunsaturated fatty acids (PUFAs) via a lipoxygenase-type mechanism. Oxygenates PUFAs to hydroperoxy compounds and then reduces them to corresponding alcohols. Plays a role in the generation of resolution phase interaction products (resolvins) during both sterile and infectious inflammation. Metabolizes docosahexaenoate (DHA, C22:6(n-3)) to 17R-HDHA, a precursor of the D-series resolvins (RvDs). As a component of the biosynthetic pathway of E-series resolvins (RvEs), converts eicosapentaenoate (EPA, C20:5(n-3)) primarily to 18S-HEPE that is further metabolized by ALOX5 and LTA4H to generate 18S-RvE1 and 18S-RvE2. In vascular endothelial cells, converts docosapentaenoate (DPA, C22:5(n-3)) to 13R-HDPA, a precursor for 13-series resolvins (RvTs) shown to activate macrophage phagocytosis during bacterial infection. In activated leukocytes, contributes to oxygenation of hydroxyeicosatetraenoates (HETE) to diHETES (5,15-diHETE and 5,11-diHETE). Can also use linoleate (LA, (9Z,12Z)-octadecadienoate, C18:2(n-6)) as substrate and produce hydroxyoctadecadienoates (HODEs) in a regio- and stereospecific manner, being (9R)-HODE ((9R)-hydroxy-(10E,12Z)-octadecadienoate) and (13S)-HODE ((13S)-hydroxy-(9Z,11E)-octadecadienoate) its major products. During neuroinflammation, plays a role in neuronal secretion of specialized preresolving mediators (SPMs) 15R-lipoxin A4 that regulates phagocytic microglia. This Bos taurus (Bovine) protein is Prostaglandin G/H synthase 2 (PTGS2).